The primary structure comprises 354 residues: Rhodopsin (354 aa).

Residues 1–36 are Extracellular-facing; it reads MNGTEGPYFYIPMVNTTGIVRSPYDYPQYYLVNPAA. N-linked (GlcNAc...) asparagine glycosylation is found at Asn-2 and Asn-15. The helical transmembrane segment at 37–61 threads the bilayer; sequence YAALGAYMFFLILVGFPINFLTLYV. Over 62–73 the chain is Cytoplasmic; sequence TIEHKKLRTPLN. The helical transmembrane segment at 74-96 threads the bilayer; that stretch reads YILLNLAVANLFMVFGGFTTTMY. Over 97 to 110 the chain is Extracellular; it reads TSMHGYFVLGRLGC. Cys-110 and Cys-187 are oxidised to a cystine. The chain crosses the membrane as a helical span at residues 111–133; that stretch reads NLEGFFATLGGEIALWSLVVLAV. The 'Ionic lock' involved in activated form stabilization signature appears at 134 to 136; that stretch reads ERW. Residues 134 to 152 are Cytoplasmic-facing; that stretch reads ERWMVVCKPISNFRFGENH. The helical transmembrane segment at 153-173 threads the bilayer; that stretch reads AIMGLAMTWLMASACAVPPLV. Over 174 to 202 the chain is Extracellular; the sequence is GWSRYIPEGMQCSCGVDYYTRAEGFNNES. N-linked (GlcNAc...) asparagine glycosylation occurs at Asn-200. The helical transmembrane segment at 203–224 threads the bilayer; sequence FVVYMFCCHFMIPLIIVFFCYG. The Cytoplasmic portion of the chain corresponds to 225 to 252; that stretch reads RLLCAVKEAAAAQQESETTQRAEREVTR. The helical transmembrane segment at 253-274 threads the bilayer; sequence MVVIMVIAFLVCWLPYASVAWW. The Extracellular portion of the chain corresponds to 275–286; that stretch reads IFTHQGSEFGPV. A helical membrane pass occupies residues 287–308; the sequence is FMTIPAFFAKSSSIYNPMIYIC. At Lys-296 the chain carries N6-(retinylidene)lysine. The Cytoplasmic segment spans residues 309-354; sequence MNKQFRNCMITTLCCGKNPFEEEEGASSTASKTEASSVSSSSVSPA. S-palmitoyl cysteine attachment occurs at residues Cys-322 and Cys-323. The interval 329 to 354 is disordered; sequence EEEEGASSTASKTEASSVSSSSVSPA. Residues 334 to 354 show a composition bias toward low complexity; it reads ASSTASKTEASSVSSSSVSPA.

This sequence belongs to the G-protein coupled receptor 1 family. Opsin subfamily. Post-translationally, phosphorylated on some or all of the serine and threonine residues present in the C-terminal region. Contains one covalently linked retinal chromophore.

The protein localises to the membrane. It localises to the cell projection. Its subcellular location is the cilium. The protein resides in the photoreceptor outer segment. In terms of biological role, photoreceptor required for image-forming vision at low light intensity. While most salt water fish species use retinal as chromophore, most freshwater fish use 3-dehydroretinal, or a mixture of retinal and 3-dehydroretinal. Light-induced isomerization of 11-cis to all-trans retinal triggers a conformational change that activates signaling via G-proteins. Subsequent receptor phosphorylation mediates displacement of the bound G-protein alpha subunit by arrestin and terminates signaling. This chain is Rhodopsin (rho), found in Mullus surmuletus (Striped red mullet).